The chain runs to 619 residues: Trihelix transcription factor GTL2 (619 aa).

2 disordered regions span residues 11 to 41 (HRFI…VSFS) and 62 to 100 (HHHH…HHHH). Positions 16–27 (SPPPPPPLPPHQ) are enriched in pro residues. Residues 102–154 (PWCSDEVLALLRFRSTVENWFPEFTWEHTSRKLAEVGFKRSPQECKEKFEEEE) form the Myb-like 1 domain. Residues 307–361 (VRNMIAQQEEMHKKLLEDMVKKEEEKIAREEAWKKQEIERVNKEVEIRAQEQAMA) are a coiled coil. 2 disordered regions span residues 382–414 (VVQN…SSLL) and 434–458 (STKT…DLGK). A compositionally biased stretch (polar residues) spans 384–396 (QNPTSPSQDSSSL). Over residues 435–444 (TKTLKPKNQN) the composition is skewed to low complexity. Residues 448-458 (PKSDDKSDLGK) are compositionally biased toward basic and acidic residues. In terms of domain architecture, Myb-like 2 spans 459 to 526 (RWPKDEVLAL…RCKEKWENIN (68 aa)). The Nuclear localization signal signature appears at 503-510 (SKKMLEIG). A disordered region spans residues 557–619 (SQPPTGTTAT…VQFSGFDLEF (63 aa)). A compositionally biased stretch (low complexity) spans 561-574 (TGTTATTATTATSA). A compositionally biased stretch (basic and acidic residues) spans 575–585 (RDLDTRPEENR).

Its subcellular location is the nucleus. In terms of biological role, probable transcription factor that binds specific DNA sequence. This chain is Trihelix transcription factor GTL2, found in Arabidopsis thaliana (Mouse-ear cress).